Consider the following 338-residue polypeptide: Sesquiterpene synthase 2 (338 aa).

Asp-93, Asn-228, Ser-232, and Glu-236 together coordinate Mg(2+). Positions Asp-93–Asp-97 match the DDXXD motif motif. Residues Asn-228–Glu-236 carry the NSE/DTE motif motif. The (2E,6E)-farnesyl diphosphate site is built by Arg-316 and Tyr-317.

Belongs to the terpene synthase family. It depends on Mg(2+) as a cofactor.

It carries out the reaction (2E,6E)-farnesyl diphosphate = alpha-copaene + diphosphate. The catalysed reaction is (2E,6E)-farnesyl diphosphate = beta-copaene + diphosphate. It catalyses the reaction (2E,6E)-farnesyl diphosphate = alpha-muurolene + diphosphate. The enzyme catalyses (2E,6E)-farnesyl diphosphate = gamma-muurolene + diphosphate. It carries out the reaction (2E,6E)-farnesyl diphosphate = delta-cadinene + diphosphate. Terpene cyclase that catalyzes the cyclization of farnesyl diphosphate (FPP) to various sesquiterpenes, including alpha-copaene, beta-copaene, beta-elemene, alpha-muurolene, gamma-muurolene and delta-cadinene. The polypeptide is Sesquiterpene synthase 2 (Postia placenta (strain ATCC 44394 / Madison 698-R) (Brown rot fungus)).